The sequence spans 276 residues: Ribosomal RNA small subunit methyltransferase A (276 aa).

S-adenosyl-L-methionine is bound by residues Asn-27, Leu-29, Gly-54, Glu-75, Asp-101, and Asn-123.

The protein belongs to the class I-like SAM-binding methyltransferase superfamily. rRNA adenine N(6)-methyltransferase family. RsmA subfamily.

Its subcellular location is the cytoplasm. It carries out the reaction adenosine(1518)/adenosine(1519) in 16S rRNA + 4 S-adenosyl-L-methionine = N(6)-dimethyladenosine(1518)/N(6)-dimethyladenosine(1519) in 16S rRNA + 4 S-adenosyl-L-homocysteine + 4 H(+). Its function is as follows. Specifically dimethylates two adjacent adenosines (A1518 and A1519) in the loop of a conserved hairpin near the 3'-end of 16S rRNA in the 30S particle. May play a critical role in biogenesis of 30S subunits. The polypeptide is Ribosomal RNA small subunit methyltransferase A (Bartonella tribocorum (strain CIP 105476 / IBS 506)).